Here is a 275-residue protein sequence, read N- to C-terminus: Melanoma-associated antigen B5 (275 aa).

Positions 1-33 (MTSAGVFNAGSDERANSRDEEYPCSSEVSPSTE) are disordered. Residues 11–21 (SDERANSRDEE) show a composition bias toward basic and acidic residues. A compositionally biased stretch (low complexity) spans 23 to 33 (PCSSEVSPSTE). Residues 40–239 (INIKVGLLEQ…GAFSSQYEEA (200 aa)) form the MAGE domain.

As to expression, expressed in testis. Not expressed in other normal tissues, but is expressed in tumors of different histological origins.

The chain is Melanoma-associated antigen B5 (MAGEB5) from Homo sapiens (Human).